The primary structure comprises 283 residues: MSFTSRLKKELFIKAQNLVPQHQLSRVVGKVAASENPILKAAVIHAFKTKYGIDLSIAEQGNALKYKSFNDFFTRALKDGVRLVDENPDSIVSPADGAISQIGKITAGEVFQAKGQSFSVEKLIGDPQLAQPFQEGEFATVYLSPRDYHRVHMPFSGTLTETLYVPGELFSVNQVTAENVPGLFARNERMVCLFDTELGRMAVVLVGAMIVAGIETVATGKVKPSGRIELQHHELKLEKGAELGRFYLGSTAIILFEKDKIEWEKRFKAESVVVMGERMGHTL.

Catalysis depends on charge relay system; for autoendoproteolytic cleavage activity residues Asp96, His152, and Ser250. The active-site Schiff-base intermediate with substrate; via pyruvic acid; for decarboxylase activity is Ser250. Ser250 bears the Pyruvic acid (Ser); by autocatalysis mark.

The protein belongs to the phosphatidylserine decarboxylase family. PSD-B subfamily. Prokaryotic type I sub-subfamily. As to quaternary structure, heterodimer of a large membrane-associated beta subunit and a small pyruvoyl-containing alpha subunit. Pyruvate serves as cofactor. Post-translationally, is synthesized initially as an inactive proenzyme. Formation of the active enzyme involves a self-maturation process in which the active site pyruvoyl group is generated from an internal serine residue via an autocatalytic post-translational modification. Two non-identical subunits are generated from the proenzyme in this reaction, and the pyruvate is formed at the N-terminus of the alpha chain, which is derived from the carboxyl end of the proenzyme. The autoendoproteolytic cleavage occurs by a canonical serine protease mechanism, in which the side chain hydroxyl group of the serine supplies its oxygen atom to form the C-terminus of the beta chain, while the remainder of the serine residue undergoes an oxidative deamination to produce ammonia and the pyruvoyl prosthetic group on the alpha chain. During this reaction, the Ser that is part of the protease active site of the proenzyme becomes the pyruvoyl prosthetic group, which constitutes an essential element of the active site of the mature decarboxylase.

It is found in the cell membrane. It carries out the reaction a 1,2-diacyl-sn-glycero-3-phospho-L-serine + H(+) = a 1,2-diacyl-sn-glycero-3-phosphoethanolamine + CO2. It participates in phospholipid metabolism; phosphatidylethanolamine biosynthesis; phosphatidylethanolamine from CDP-diacylglycerol: step 2/2. Functionally, catalyzes the formation of phosphatidylethanolamine (PtdEtn) from phosphatidylserine (PtdSer). This chain is Phosphatidylserine decarboxylase proenzyme, found in Acinetobacter baumannii (strain AB0057).